Consider the following 207-residue polypeptide: Outer-membrane lipoprotein LolB (207 aa).

A signal peptide spans 1-21 (MPLPDFRFIRLLPLAALVLTA). The N-palmitoyl cysteine moiety is linked to residue C22. C22 carries S-diacylglycerol cysteine lipidation.

The protein belongs to the LolB family. In terms of assembly, monomer.

The protein resides in the cell outer membrane. Its function is as follows. Plays a critical role in the incorporation of lipoproteins in the outer membrane after they are released by the LolA protein. The protein is Outer-membrane lipoprotein LolB of Escherichia coli O6:H1 (strain CFT073 / ATCC 700928 / UPEC).